Consider the following 129-residue polypeptide: Small ribosomal subunit protein bS6 (129 aa).

The segment at 100–129 is disordered; the sequence is SIMLKQKEERAPRREERSEAKPEAKSEAAE. Basic and acidic residues predominate over residues 104–129; that stretch reads KQKEERAPRREERSEAKPEAKSEAAE.

Belongs to the bacterial ribosomal protein bS6 family.

In terms of biological role, binds together with bS18 to 16S ribosomal RNA. This chain is Small ribosomal subunit protein bS6, found in Vibrio parahaemolyticus serotype O3:K6 (strain RIMD 2210633).